A 104-amino-acid chain; its full sequence is Pole-localizer protein TmaR (104 aa).

2 coiled-coil regions span residues 7 to 34 (IVNQ…NRKR) and 76 to 96 (SAEI…LTEE).

It belongs to the pole-localizer TmaR family.

It localises to the cytoplasm. Functionally, pole-localizer protein involved in the regulation of several cellular processes. This chain is Pole-localizer protein TmaR, found in Vibrio atlanticus (strain LGP32) (Vibrio splendidus (strain Mel32)).